Consider the following 49-residue polypeptide: uncharacterized protein (49 aa).

A signal peptide spans 1-22 (MIQKPILLSSFLFLYIRALLHS).

This is an uncharacterized protein from Saccharomyces cerevisiae (strain ATCC 204508 / S288c) (Baker's yeast).